Consider the following 209-residue polypeptide: Uracil phosphoribosyltransferase (209 aa).

Residues arginine 79, arginine 104, and 131–139 each bind 5-phospho-alpha-D-ribose 1-diphosphate; that span reads DPMLATGGS. Residues isoleucine 194 and 199 to 201 contribute to the uracil site; that span reads GDA. Aspartate 200 contributes to the 5-phospho-alpha-D-ribose 1-diphosphate binding site.

The protein belongs to the UPRTase family. The cofactor is Mg(2+).

The enzyme catalyses UMP + diphosphate = 5-phospho-alpha-D-ribose 1-diphosphate + uracil. Its pathway is pyrimidine metabolism; UMP biosynthesis via salvage pathway; UMP from uracil: step 1/1. Its activity is regulated as follows. Allosterically activated by GTP. Its function is as follows. Catalyzes the conversion of uracil and 5-phospho-alpha-D-ribose 1-diphosphate (PRPP) to UMP and diphosphate. In Geobacter sulfurreducens (strain ATCC 51573 / DSM 12127 / PCA), this protein is Uracil phosphoribosyltransferase.